The following is a 497-amino-acid chain: DNA-dependent metalloprotease SPRTN (497 aa).

Met1 is subject to N-acetylmethionine. A SprT-like domain is found at 46-213 (LQALFLQFND…KTCGGTYIKI (168 aa)). Zn(2+) is bound at residue His112. The active site involves Glu113. Zn(2+) is bound by residues His116 and His131. Lys231 bears the N6-acetyllysine mark. The SHP-box signature appears at 254–262 (FSGKGYVLG). A Phosphoserine modification is found at Ser269. A Glycyl lysine isopeptide (Lys-Gly) (interchain with G-Cter in SUMO2) cross-link involves residue Lys304. The PIP-box signature appears at 326-333 (QSVLSSYF). Lys342 is covalently cross-linked (Glycyl lysine isopeptide (Lys-Gly) (interchain with G-Cter in SUMO2); alternate). Residue Lys342 forms a Glycyl lysine isopeptide (Lys-Gly) (interchain with G-Cter in ubiquitin); alternate linkage. Residues 344–459 (FRNVNGSPVK…ASAPQSLSSQ (116 aa)) form a disordered region. The span at 347 to 356 (VNGSPVKNGT) shows a compositional bias: polar residues. Residue Lys362 forms a Glycyl lysine isopeptide (Lys-Gly) (interchain with G-Cter in SUMO2) linkage. Residues 383 to 404 (TSKVTAPASATVTSAAGTSATI) show a composition bias toward low complexity. Position 384 is a phosphoserine (Ser384). Positions 413–424 (DQFLNKRPRLED) match the Nuclear localization signal motif. Residues 420 to 432 (PRLEDRTALDTIK) show a composition bias toward basic and acidic residues. Lys432 participates in a covalent cross-link: Glycyl lysine isopeptide (Lys-Gly) (interchain with G-Cter in SUMO2). A compositionally biased stretch (low complexity) spans 442–459 (RSSSQPTAASAPQSLSSQ). A UBZ4-type zinc finger spans residues 462-489 (LVNCPVCQGVVVESQINEHLDRCLEGNK). Cys465, Cys468, His480, and Cys484 together coordinate Zn(2+).

It belongs to the Spartan family. Homodimer. Interacts (VIA PIP-box) with PCNA (when ubiquitinated). Interacts (via its SHP-box) with VCP/p97. Interacts with RAD18. Interacts with KCTD13 and POLD3. Zn(2+) serves as cofactor. Post-translationally, autocatalytically cleaved in response to double-stranded DNA-binding: autocatalytic cleavage takes place in trans and leads to inactivation. In terms of processing, monoubiquitinated; monoubiquitination promotes exclusion from chromatin. Deubiquitinated by VCPIP1: deubiquitination is required for subsequent acetylation and recruitment to chromatin and DNA damage sites. Acetylated following deubiquitination by VCPIP1, leading to recruitment to chromatin and DNA damage sites. Post-translationally, phosphorylation by CHEK1 promotes recruitment to chromatin.

It is found in the nucleus. The protein resides in the chromosome. DNA-binding activates the protease activity: single-stranded DNA-binding specifically activates ability to cleave covalent DNA-protein cross-links (DPCs). In contrast, double-stranded DNA-binding specifically activates autocatalytic cleavage, and subsequent inactivation. Its function is as follows. DNA-dependent metalloendopeptidase that mediates the proteolytic cleavage of covalent DNA-protein cross-links (DPCs) during DNA synthesis, thereby playing a key role in maintaining genomic integrity. DPCs are highly toxic DNA lesions that interfere with essential chromatin transactions, such as replication and transcription, and which are induced by reactive agents, such as UV light or formaldehyde. Associates with the DNA replication machinery and specifically removes DPCs during DNA synthesis. Catalyzes proteolytic cleavage of the HMCES DNA-protein cross-link following unfolding by the BRIP1/FANCJ helicase. Acts as a pleiotropic protease for DNA-binding proteins cross-linked with DNA, such as TOP1, TOP2A, histones H3 and H4. Mediates degradation of DPCs that are not ubiquitinated, while it is not able to degrade ubiquitinated DPCs. SPRTN activation requires polymerase collision with DPCs followed by helicase bypass of DPCs. Involved in recruitment of VCP/p97 to sites of DNA damage. Also acts as an activator of CHEK1 during normal DNA replication by mediating proteolytic cleavage of CHEK1, thereby promoting CHEK1 removal from chromatin and subsequent activation. Does not activate CHEK1 in response to DNA damage. May also act as a 'reader' of ubiquitinated PCNA: recruited to sites of UV damage and interacts with ubiquitinated PCNA and RAD18, the E3 ubiquitin ligase that monoubiquitinates PCNA. Facilitates chromatin association of RAD18 and is required for efficient PCNA monoubiquitination, promoting a feed-forward loop to enhance PCNA ubiquitination and translesion DNA synthesis. This chain is DNA-dependent metalloprotease SPRTN, found in Mus musculus (Mouse).